We begin with the raw amino-acid sequence, 618 residues long: Membrane protein insertase YidC (618 aa).

The next 6 helical transmembrane spans lie at 3–23 (KNTITGLVLIGILLVGFSFLS), 363–383 (WGLSMGIVLLLLTIMVKIVVF), 439–459 (LPMLLQFPILMALFMFVPSAI), 478–498 (FITFPFHIPFLGNHLSLFCLL), 520–540 (PQMAAMKWMMYLMPIMFLFVL), and 545–565 (SGLNYYYFISTLISVVTMIIL).

The protein belongs to the OXA1/ALB3/YidC family. Type 1 subfamily. In terms of assembly, interacts with the Sec translocase complex via SecD. Specifically interacts with transmembrane segments of nascent integral membrane proteins during membrane integration.

The protein resides in the cell inner membrane. Its function is as follows. Required for the insertion and/or proper folding and/or complex formation of integral membrane proteins into the membrane. Involved in integration of membrane proteins that insert both dependently and independently of the Sec translocase complex, as well as at least some lipoproteins. Aids folding of multispanning membrane proteins. This Bacteroides fragilis (strain ATCC 25285 / DSM 2151 / CCUG 4856 / JCM 11019 / LMG 10263 / NCTC 9343 / Onslow / VPI 2553 / EN-2) protein is Membrane protein insertase YidC.